The following is a 356-amino-acid chain: Thymidine kinase (356 aa).

Residues 1 to 29 (MMDSRATYVPPKKISESNSNAEEDPTDCS) form a disordered region. Residue 61–68 (GCVGVGKT) participates in ATP binding. The Proton acceptor role is filled by E86. Substrate is bound at residue Q122. Residue R208 participates in ATP binding. R214 contributes to the substrate binding site.

This sequence belongs to the herpesviridae thymidine kinase family. Homodimer.

It catalyses the reaction thymidine + ATP = dTMP + ADP + H(+). Functionally, catalyzes the transfer of the gamma-phospho group of ATP to thymidine to generate dTMP in the salvage pathway of pyrimidine synthesis. The dTMP serves as a substrate for DNA polymerase during viral DNA replication. Allows the virus to be reactivated and to grow in non-proliferative cells lacking a high concentration of phosphorylated nucleic acid precursors. The chain is Thymidine kinase from Elephas maximus (Indian elephant).